Reading from the N-terminus, the 457-residue chain is Dihydrolipoyl dehydrogenase (457 aa).

FAD contacts are provided by residues 32–40, Lys49, and Ala113; that span reads EKEYFGGVC. An intrachain disulfide couples Cys40 to Cys45. Residues 178–182, Val235, and 262–265 contribute to the NAD(+) site; these read GGGVI and SIGR. Asp303 and Ala311 together coordinate FAD. The Proton acceptor role is filled by His437.

It belongs to the class-I pyridine nucleotide-disulfide oxidoreductase family. In terms of assembly, homodimer. It depends on FAD as a cofactor.

The protein localises to the cytoplasm. It catalyses the reaction N(6)-[(R)-dihydrolipoyl]-L-lysyl-[protein] + NAD(+) = N(6)-[(R)-lipoyl]-L-lysyl-[protein] + NADH + H(+). Its function is as follows. Lipoamide dehydrogenase is a component of the alpha-ketoacid dehydrogenase complexes. This is Dihydrolipoyl dehydrogenase (pdhD) from Mycoplasma pneumoniae (strain ATCC 29342 / M129 / Subtype 1) (Mycoplasmoides pneumoniae).